Reading from the N-terminus, the 129-residue chain is Lysozyme C-1 (129 aa).

The C-type lysozyme domain maps to 1 to 129; sequence KVFERCELAR…VSSYVEGCTL (129 aa). Cystine bridges form between Cys6–Cys127, Cys30–Cys115, Cys65–Cys81, and Cys77–Cys95. Catalysis depends on residues Glu35 and Asp53.

The protein belongs to the glycosyl hydrolase 22 family. As to quaternary structure, monomer.

The catalysed reaction is Hydrolysis of (1-&gt;4)-beta-linkages between N-acetylmuramic acid and N-acetyl-D-glucosamine residues in a peptidoglycan and between N-acetyl-D-glucosamine residues in chitodextrins.. Lysozymes have primarily a bacteriolytic function; those in tissues and body fluids are associated with the monocyte-macrophage system and enhance the activity of immunoagents. The chain is Lysozyme C-1 from Capra hircus (Goat).